The sequence spans 410 residues: MDGDDRRTPLLGGEGGSTRPPSLRRRDSARSLRSTFLSRLPDKVRGGGDPERPAADVDLTRAKGLSQGEKEYYEKQLATLKIFEEVEALCMPGEFESDAEVLELEDKEQKQSESAMKISNYANIILLVFKVYATIKTGSMAIAASTLDSLLDFLAGGILYFTHLTMKSVNIYKYPIGKLRVQPVGIIVFAAIMATLGFQVLIQAIEQLVENKAGEKMTPEQLIWLYSIMLSATVVKLALYIYCRSSGNSIVQAYAKDHYFDVVTNVVGLVAAVLGDKFFWWIDPVGAVLLAVYTIVNWSGTVYENAVTLVGQCAPSDMLQKLTYLAMKHDPRVRRVDTVRAYSFGALYFVEVDIELSEDMRLGEAHSIGESLQDKIEKLPEVERAFVHVDFESTHKPEHRVRSRLPSTEP.

Residues Met1–Asp58 form a disordered region. The Cytoplasmic segment spans residues Met1–Ser114. Residues Leu40–Asp58 show a composition bias toward basic and acidic residues. The chain crosses the membrane as a helical span at residues Ala115–Ile135. Topologically, residues Lys136–Met140 are vacuolar. The helical transmembrane segment at Ala141–Phe161 threads the bilayer. At Thr162 to Val184 the chain is on the cytoplasmic side. Residues Gly185 to Ile205 traverse the membrane as a helical segment. The Vacuolar segment spans residues Glu206–Gln221. Residues Leu222 to Tyr242 traverse the membrane as a helical segment. Over Cys243–His258 the chain is Cytoplasmic. Residues Tyr259–Gly275 traverse the membrane as a helical segment. Over Asp276–Pro284 the chain is Vacuolar. A helical transmembrane segment spans residues Val285–Tyr303. At Glu304 to Pro410 the chain is on the cytoplasmic side.

Belongs to the cation diffusion facilitator (CDF) transporter (TC 2.A.4) family. SLC30A subfamily.

It localises to the vacuole membrane. Involved in sequestration of excess metal in the cytoplasm into vacuoles to maintain metal homeostasis. This is Metal tolerance protein 3 (MTP3) from Oryza sativa subsp. japonica (Rice).